The sequence spans 59 residues: Early growth response protein 1 (59 aa).

3 C2H2-type zinc fingers span residues 1–18 (CDRR…IRIH), 24–46 (FQCR…IRTH), and 52–59 (FACDICGR).

This sequence belongs to the EGR C2H2-type zinc-finger protein family.

It is found in the nucleus. The protein resides in the cytoplasm. Its function is as follows. Transcriptional regulator. Recognizes and binds to the DNA sequence 5'-GCG(T/G)GGGCG-3'(EGR-site) in the promoter region of target genes. Binds double-stranded target DNA, irrespective of the cytosine methylation status. Regulates the transcription of numerous target genes, and thereby plays an important role in regulating the response to growth factors, DNA damage, and ischemia. Plays a role in the regulation of cell survival, proliferation and cell death. Mediates responses to ischemia and hypoxia; regulates the expression of proteins that are involved in inflammatory processes. Plays a role in regulating the expression of circadian clock genes. The chain is Early growth response protein 1 (EGR1) from Serinus canaria (Island canary).